Consider the following 309-residue polypeptide: Ribonuclease Z (309 aa).

His-63, His-65, Asp-67, His-68, His-145, Asp-216, and His-274 together coordinate Zn(2+). The active-site Proton acceptor is Asp-67.

Belongs to the RNase Z family. Homodimer. Requires Zn(2+) as cofactor.

The catalysed reaction is Endonucleolytic cleavage of RNA, removing extra 3' nucleotides from tRNA precursor, generating 3' termini of tRNAs. A 3'-hydroxy group is left at the tRNA terminus and a 5'-phosphoryl group is left at the trailer molecule.. Zinc phosphodiesterase, which displays some tRNA 3'-processing endonuclease activity. Probably involved in tRNA maturation, by removing a 3'-trailer from precursor tRNA. The protein is Ribonuclease Z of Streptococcus pneumoniae serotype 19F (strain G54).